Consider the following 316-residue polypeptide: uncharacterized protein (316 aa).

The S4 RNA-binding domain maps to 26-98 (ERIDRFLAGA…IPLDVVYEDA (73 aa)). D148 is a catalytic residue.

The protein belongs to the pseudouridine synthase RluA family.

It carries out the reaction a uridine in RNA = a pseudouridine in RNA. This is an uncharacterized protein from Chloroflexus aurantiacus (strain ATCC 29366 / DSM 635 / J-10-fl).